The chain runs to 198 residues: MYEGPVQDLIDELGRLPGIGPKSAQRIAFHLLAAEPADVTRLQEVLQKVKEGVVFCDICGNVSEEPTCRICRDARRDPAVVCVVEEPKDVLAVERTREFRGRYHVLGGALDPLSGVGPDQLRVRELLTRIGRDEITEVIIATDPNTEGEATATYLVRMLRDFPGLNVTRLASGLPMGGDLEFADELTLGRALSGRRAV.

A C4-type zinc finger spans residues 56 to 71; that stretch reads CDICGNVSEEPTCRIC. One can recognise a Toprim domain in the interval 79-175; it reads AVVCVVEEPK…NVTRLASGLP (97 aa).

The protein belongs to the RecR family.

Functionally, may play a role in DNA repair. It seems to be involved in an RecBC-independent recombinational process of DNA repair. It may act with RecF and RecO. In Saccharopolyspora erythraea (strain ATCC 11635 / DSM 40517 / JCM 4748 / NBRC 13426 / NCIMB 8594 / NRRL 2338), this protein is Recombination protein RecR.